The following is a 418-amino-acid chain: UDP-N-acetylglucosamine 1-carboxyvinyltransferase (418 aa).

23-24 is a phosphoenolpyruvate binding site; sequence KN. Arg-93 lines the UDP-N-acetyl-alpha-D-glucosamine pocket. The active-site Proton donor is Asp-117. Positions 305 and 327 each coordinate UDP-N-acetyl-alpha-D-glucosamine.

It belongs to the EPSP synthase family. MurA subfamily.

The protein localises to the cytoplasm. The enzyme catalyses phosphoenolpyruvate + UDP-N-acetyl-alpha-D-glucosamine = UDP-N-acetyl-3-O-(1-carboxyvinyl)-alpha-D-glucosamine + phosphate. The protein operates within cell wall biogenesis; peptidoglycan biosynthesis. In terms of biological role, cell wall formation. Adds enolpyruvyl to UDP-N-acetylglucosamine. The polypeptide is UDP-N-acetylglucosamine 1-carboxyvinyltransferase (Corynebacterium jeikeium (strain K411)).